Reading from the N-terminus, the 205-residue chain is Melanocortin-2 receptor accessory protein 2 (205 aa).

The N-linked (GlcNAc...) asparagine glycan is linked to asparagine 9. Residues 45-65 form a helical membrane-spanning segment; sequence IVIGFWVGLAVFVIFMFFVLT. Serine 89 is subject to Phosphoserine.

The protein belongs to the MRAP family. Homodimer and heterodimer. Forms antiparallel homodimers and heterodimers with MRAP. Interacts with MC1R, MC2R, MC3R, MC4R and MC5R. In terms of tissue distribution, expressed in the adrenal gland and brain. Not expressed in other tissues.

The protein resides in the cell membrane. The protein localises to the endoplasmic reticulum membrane. Functionally, modulator of melanocortin receptor 4 (MC4R), a receptor involved in energy homeostasis. Plays a central role in the control of energy homeostasis and body weight regulation by increasing ligand-sensitivity of MC4R and MC4R-mediated generation of cAMP. May also act as a negative regulator of MC2R: competes with MRAP for binding to MC2R and impairs the binding of corticotropin (ACTH) to MC2R. May also regulate activity of other melanocortin receptors (MC1R, MC3R and MC5R); however, additional evidence is required in vivo. The polypeptide is Melanocortin-2 receptor accessory protein 2 (MRAP2) (Homo sapiens (Human)).